The primary structure comprises 137 residues: Large ribosomal subunit protein uL16 (137 aa).

Belongs to the universal ribosomal protein uL16 family. In terms of assembly, part of the 50S ribosomal subunit.

Functionally, binds 23S rRNA and is also seen to make contacts with the A and possibly P site tRNAs. The sequence is that of Large ribosomal subunit protein uL16 from Leuconostoc mesenteroides subsp. mesenteroides (strain ATCC 8293 / DSM 20343 / BCRC 11652 / CCM 1803 / JCM 6124 / NCDO 523 / NBRC 100496 / NCIMB 8023 / NCTC 12954 / NRRL B-1118 / 37Y).